The primary structure comprises 496 residues: MTKDGDEGSKSGVSRRKFLGSAAVGVATAGIASQLLTLSAPAEAAVKTNVGPSRAGVGYDVIVIGGGFAGVTAAREASRSGLKTLILEGRSRLGGRTFTSKLQNQKVELGGTWVHWTQPNVWTEIMHYGLEVEETVGLANPETVIWVTEDNVKRAPAAEAFEIFGSACNEYYKEARNIYPRPFEPFFERKKLQHVDGLSAADYLEKLPLTREQKDMMDSWLSGNGHNYPETIAYSEIMRWFALSNFNMPTMFDSIARYKIKTGTHSLLEAIMADGNSEVKLSTPVTKVNQDKDKVTVTTEDGVFTASAVIVAVPINTLHDIEYSPKLSAAKVDMGSQRHAGAGVKGYIRVKQNVGNVMTYAPARNKLTPFTSVFTDHVDESGTLLIAFSADPKLIDINDIKAVEKALQPLLPGVEVTASYGYDWNLDPFSKGTWCTYRPNQTTRYLTELQKREGRLFFAGSDMANGWRGFIDGAIENGREVGHQVATYLKRENDNA.

Residues 1–42 (MTKDGDEGSKSGVSRRKFLGSAAVGVATAGIASQLLTLSAPA) constitute a signal peptide (tat-type signal). Residues Ala-69, Glu-88, Arg-96, Trp-113, Val-285, Ser-461, and Ile-471 each coordinate FAD.

The protein belongs to the flavin monoamine oxidase family. As to quaternary structure, homodimer. It depends on FAD as a cofactor. In terms of processing, predicted to be exported by the Tat system. The position of the signal peptide cleavage has not been experimentally proven.

Its subcellular location is the periplasm. The enzyme catalyses pseudooxynicotine + 2 Fe(III)-[cytochrome c] + H2O = 4-oxo-4-(pyridin-3-yl)butanal + methylamine + 2 Fe(II)-[cytochrome c] + 2 H(+). Its pathway is alkaloid degradation; nicotine degradation. Its activity is regulated as follows. Strongly inhibited by Na(2)MoO(4) and FeCl(3). Activity is nearly twice as high in the presence of Na(2)WO(4). Its function is as follows. Involved in nicotine degradation. Catalyzes the deamination of pseudooxynicotine to 3-succinoylsemialdehyde-pyridine. Functions as a dehydrogenase that uses the c-type cytochrome protein CycN as the physiological electron acceptor. O(2) is a poor electron acceptor. Pnao is oxidized by CycN 230 times faster than O(2) at equivalent oxidant concentrations. The sequence is that of Pseudooxynicotine dehydrogenase from Pseudomonas putida (strain DSM 28022 / S16).